A 116-amino-acid chain; its full sequence is Evasin P1180 (116 aa).

The signal sequence occupies residues 1–25 (MARNWSFRVIFVSAMWCALLKFATL). 4 disulfide bridges follow: Cys-38–Cys-58, Cys-54–Cys-95, Cys-71–Cys-100, and Cys-90–Cys-109. Asn-45, Asn-73, and Asn-104 each carry an N-linked (GlcNAc...) asparagine glycan.

It is found in the secreted. Its function is as follows. Salivary chemokine-binding protein which binds to host chemokines CCL2, CCL3, CCL4, CCL8 and CCL18. This is Evasin P1180 from Amblyomma triste (Neotropical tick).